The sequence spans 556 residues: 2-succinyl-5-enolpyruvyl-6-hydroxy-3-cyclohexene-1-carboxylate synthase (556 aa).

It belongs to the TPP enzyme family. MenD subfamily. As to quaternary structure, homodimer. It depends on Mg(2+) as a cofactor. The cofactor is Mn(2+). Thiamine diphosphate is required as a cofactor.

It catalyses the reaction isochorismate + 2-oxoglutarate + H(+) = 5-enolpyruvoyl-6-hydroxy-2-succinyl-cyclohex-3-ene-1-carboxylate + CO2. It functions in the pathway quinol/quinone metabolism; 1,4-dihydroxy-2-naphthoate biosynthesis; 1,4-dihydroxy-2-naphthoate from chorismate: step 2/7. Its pathway is quinol/quinone metabolism; menaquinone biosynthesis. Catalyzes the thiamine diphosphate-dependent decarboxylation of 2-oxoglutarate and the subsequent addition of the resulting succinic semialdehyde-thiamine pyrophosphate anion to isochorismate to yield 2-succinyl-5-enolpyruvyl-6-hydroxy-3-cyclohexene-1-carboxylate (SEPHCHC). This chain is 2-succinyl-5-enolpyruvyl-6-hydroxy-3-cyclohexene-1-carboxylate synthase, found in Citrobacter koseri (strain ATCC BAA-895 / CDC 4225-83 / SGSC4696).